Reading from the N-terminus, the 718-residue chain is NF-kappa-B inhibitor zeta (718 aa).

The segment covering 1-17 has biased composition (basic and acidic residues); that stretch reads MIVDKLLDDSRGGEGLR. Disordered regions lie at residues 1-20 and 58-108; these read MIVDKLLDDSRGGEGLRDAA and SAPG…RQQR. Over residues 58–83 the composition is skewed to low complexity; that stretch reads SAPGSPGSDSSDFSSASSVSSCGAVE. The span at 84–97 shows a compositional bias: basic and acidic residues; it reads SRSRGGARAERQPV. Residues 108–130 form the OCA domain; that stretch reads RGPFQGVRVKNSVKELLLHIRSH. The short motif at 164 to 179 is the Nuclear localization signal element; that stretch reads KRKGPDSLSDGPACKR. Positions 186 to 211 are disordered; it reads QFLTPPQTPTPGESMEDVHLNEPKQE. Residues 201–211 show a composition bias toward basic and acidic residues; it reads EDVHLNEPKQE. The segment at 321–394 is required for transcriptional activity; that stretch reads AYEPNLFDGP…MVGHEMASDS (74 aa). The tract at residues 404–718 is interaction with NFKB1/p50; sequence MGNPMNTTQL…KSIQQRAPPY (315 aa). ANK repeat units follow at residues 443-472, 479-508, 512-541, 551-580, 582-607, 612-641, and 648-681; these read DGDTFLHIAVAQGRRALSYVLARKMNALHM, NGQSAFQVAVAANQHLIVQDLVNIGAQVNT, WGRTPLHVCAEKGHSQVLQAIQKGAVGSNQ, DGLTPLHCAVIAHNAVVHELQRNQQPHSPE, QELLLKNKSLVDTIKCLIQMGAAVEA, SGRTALHLAAEEANLELIRLFLELPSCLSF, and NGNTALHVAASLQYRLTQLDAVRLLMRKGADPST.

In terms of assembly, interacts with NFKB1/p50. Interacts with RELA. Interacts with AKIRIN2. In terms of tissue distribution, expressed at high levels in peripheral blood leukocytes and lung, at moderate levels in liver, placenta, and at low levels in spleen, kidney, skeletal muscle and heart.

It is found in the nucleus. In terms of biological role, involved in regulation of NF-kappa-B transcription factor complexes. Inhibits NF-kappa-B activity without affecting its nuclear translocation upon stimulation. Inhibits DNA-binding of RELA and NFKB1/p50, and of the NF-kappa-B p65-p50 heterodimer and the NF-kappa-B p50-p50 homodimer. Also seems to activate NF-kappa-B-mediated transcription. In vitro, upon association with NFKB1/p50 has transcriptional activation activity and, together with NFKB1/p50 and RELA, is recruited to LCN2 promoters. Promotes transcription of LCN2 and DEFB4. Is recruited to IL-6 promoters and activates IL-6 but decreases TNF-alpha production in response to LPS. Seems to be involved in the induction of inflammatory genes activated through TLR/IL-1 receptor signaling. Involved in the induction of T helper 17 cells (Th17) differentiation upon recognition of antigen by T cell antigen receptor (TCR). In Homo sapiens (Human), this protein is NF-kappa-B inhibitor zeta (NFKBIZ).